A 132-amino-acid polypeptide reads, in one-letter code: Global transcriptional regulator Spx (132 aa).

Cys-10 and Cys-13 are oxidised to a cystine.

This sequence belongs to the ArsC family. Spx subfamily. Interacts with the C-terminal domain of the alpha subunit of the RNAP.

Its subcellular location is the cytoplasm. Functionally, global transcriptional regulator that plays a key role in stress response and exerts either positive or negative regulation of genes. Acts by interacting with the C-terminal domain of the alpha subunit of the RNA polymerase (RNAP). This interaction can enhance binding of RNAP to the promoter region of target genes and stimulate their transcription, or block interaction of RNAP with activator. This chain is Global transcriptional regulator Spx, found in Enterococcus faecalis (strain ATCC 700802 / V583).